The chain runs to 117 residues: Ig heavy chain V region UPC10 (117 aa).

In terms of domain architecture, Ig-like spans 1–116 (EVKLLESGGG…WGQVTTLTVS (116 aa)).

The sequence is that of Ig heavy chain V region UPC10 from Mus musculus (Mouse).